The chain runs to 246 residues: 3'(2'),5'-bisphosphate nucleotidase CysQ (246 aa).

Mg(2+) is bound by residues Glu-64, Asp-83, Leu-85, Asp-86, and Asp-205. Residue Glu-64 participates in substrate binding. Residues 85–88 (LDGT) and Asp-205 each bind substrate.

This sequence belongs to the inositol monophosphatase superfamily. CysQ family. It depends on Mg(2+) as a cofactor.

It is found in the cell inner membrane. The enzyme catalyses adenosine 3',5'-bisphosphate + H2O = AMP + phosphate. Its activity is regulated as follows. Inhibited by lithium and calcium. Functionally, converts adenosine-3',5'-bisphosphate (PAP) to AMP. May also convert adenosine 3'-phosphate 5'-phosphosulfate (PAPS) to adenosine 5'-phosphosulfate (APS). Has 10000-fold lower activity towards inositol 1,4-bisphosphate (Ins(1,4)P2). In Escherichia coli (strain K12), this protein is 3'(2'),5'-bisphosphate nucleotidase CysQ.